We begin with the raw amino-acid sequence, 87 residues long: Small ribosomal subunit protein uS15 (87 aa).

The protein belongs to the universal ribosomal protein uS15 family. Part of the 30S ribosomal subunit. Forms a bridge to the 50S subunit in the 70S ribosome, contacting the 23S rRNA.

Its function is as follows. One of the primary rRNA binding proteins, it binds directly to 16S rRNA where it helps nucleate assembly of the platform of the 30S subunit by binding and bridging several RNA helices of the 16S rRNA. Forms an intersubunit bridge (bridge B4) with the 23S rRNA of the 50S subunit in the ribosome. The sequence is that of Small ribosomal subunit protein uS15 from Ruminiclostridium cellulolyticum (strain ATCC 35319 / DSM 5812 / JCM 6584 / H10) (Clostridium cellulolyticum).